A 456-amino-acid polypeptide reads, in one-letter code: Kynurenine 3-monooxygenase (456 aa).

Belongs to the aromatic-ring hydroxylase family. KMO subfamily. FAD serves as cofactor.

The protein resides in the mitochondrion outer membrane. It carries out the reaction L-kynurenine + NADPH + O2 + H(+) = 3-hydroxy-L-kynurenine + NADP(+) + H2O. It participates in cofactor biosynthesis; NAD(+) biosynthesis; quinolinate from L-kynurenine: step 1/3. Functionally, catalyzes the hydroxylation of L-kynurenine (L-Kyn) to form 3-hydroxy-L-kynurenine (L-3OHKyn). Required for synthesis of quinolinic acid. The sequence is that of Kynurenine 3-monooxygenase from Candida albicans (strain SC5314 / ATCC MYA-2876) (Yeast).